The primary structure comprises 164 residues: HTH-type transcriptional regulator IscR (164 aa).

Residues 2-131 (RLTSKGRYAV…NNITLAELVN (130 aa)) enclose the HTH rrf2-type domain. The H-T-H motif DNA-binding region spans 28–51 (LADISERQGISLSYLEQLFSRLRK). 3 residues coordinate [2Fe-2S] cluster: Cys-92, Cys-98, and Cys-104. Positions 143-164 (NNDTRRTANGRPQETINVNLRA) are disordered. Residues 152-164 (GRPQETINVNLRA) show a composition bias toward polar residues.

The cofactor is [2Fe-2S] cluster.

Its function is as follows. Regulates the transcription of several operons and genes involved in the biogenesis of Fe-S clusters and Fe-S-containing proteins. The polypeptide is HTH-type transcriptional regulator IscR (Yersinia pseudotuberculosis serotype O:1b (strain IP 31758)).